We begin with the raw amino-acid sequence, 674 residues long: Regulator of G-protein signaling 9 (674 aa).

The 76-residue stretch at 30–105 (PETGVRMQNQ…PDGSLYRFQT (76 aa)) folds into the DEP domain. The region spanning 219–280 (KQTVVAVKKE…NPWITDDTQF (62 aa)) is the G protein gamma domain. An RGS domain is found at 298–413 (RWAFNFSELI…YARYLKSPIY (116 aa)). The tract at residues 533-573 (SSGLEQKGECSGSMAPRGPSVTESSEASLDTSWPRSRPRAP) is disordered. The span at 553–565 (VTESSEASLDTSW) shows a compositional bias: polar residues.

Heterodimer with GNB5. Interacts with RGS7BP, leading to regulate the subcellular location of the heterodimer formed with GNB5. Component of the RGS9-1-Gbeta5 complex composed of RGS9 (RGS9-1), Gbeta5 (GNB5) and RGS9BP. Interacts with PDE6G and GNAT1. Retinal isoform 3 is light-dependent phosphorylated at 'Ser-478'. Phosphorylation is decreased by light exposition. As to expression, highly expressed in the caudate and putamen, lower levels found in the hypothalamus and nucleus accumbens and very low levels in cerebellum. Not expressed in globus pallidus or cingulate cortex. Isoform 2 is expressed predominantly in pineal gland and retina. Isoform 3 is expressed in retina (abundant in photoreceptors).

It localises to the membrane. In terms of biological role, inhibits signal transduction by increasing the GTPase activity of G protein alpha subunits thereby driving them into their inactive GDP-bound form. Binds to GNAT1. Involved in phototransduction; key element in the recovery phase of visual transduction. The protein is Regulator of G-protein signaling 9 (RGS9) of Homo sapiens (Human).